Here is a 379-residue protein sequence, read N- to C-terminus: Homoserine O-acetyltransferase (379 aa).

Residues 45–355 (NAILILHALT…PHGHDAFLIE (311 aa)) enclose the AB hydrolase-1 domain. The active-site Nucleophile is Ser-151. Arg-220 lines the substrate pocket. Residues Asp-316 and His-349 contribute to the active site. Residue Asp-350 participates in substrate binding.

This sequence belongs to the AB hydrolase superfamily. MetX family. Homodimer.

The protein localises to the cytoplasm. The enzyme catalyses L-homoserine + acetyl-CoA = O-acetyl-L-homoserine + CoA. It participates in amino-acid biosynthesis; L-methionine biosynthesis via de novo pathway; O-acetyl-L-homoserine from L-homoserine: step 1/1. Its function is as follows. Transfers an acetyl group from acetyl-CoA to L-homoserine, forming acetyl-L-homoserine. The protein is Homoserine O-acetyltransferase of Carboxydothermus hydrogenoformans (strain ATCC BAA-161 / DSM 6008 / Z-2901).